The sequence spans 367 residues: Phosphoribosylaminoimidazole-succinocarboxamide synthase (367 aa).

Belongs to the SAICAR synthetase family.

The enzyme catalyses 5-amino-1-(5-phospho-D-ribosyl)imidazole-4-carboxylate + L-aspartate + ATP = (2S)-2-[5-amino-1-(5-phospho-beta-D-ribosyl)imidazole-4-carboxamido]succinate + ADP + phosphate + 2 H(+). It participates in purine metabolism; IMP biosynthesis via de novo pathway; 5-amino-1-(5-phospho-D-ribosyl)imidazole-4-carboxamide from 5-amino-1-(5-phospho-D-ribosyl)imidazole-4-carboxylate: step 1/2. In Aeromonas salmonicida (strain A449), this protein is Phosphoribosylaminoimidazole-succinocarboxamide synthase.